The following is a 3948-amino-acid chain: Hybrid PKS-NRPS synthetase ucsA (3948 aa).

Positions 11–440 constitute a Ketosynthase family 3 (KS3) domain; sequence NEPIAVIGSG…GTNAHAILER (430 aa). Residues Cys184, His323, and His363 each act as for beta-ketoacyl synthase activity in the active site. The interval 548-881 is malonyl-CoA:ACP transacylase (MAT) domain; the sequence is IFTGQGAQWP…FSTAIGQLWA (334 aa). The interval 940-1079 is N-terminal hotdog fold; sequence HPLLGTLGAD…GHIRLTITDF (140 aa). The interval 940–1254 is dehydratase (DH) domain; that stretch reads HPLLGTLGAD…IRLIPFAAAS (315 aa). The PKS/mFAS DH domain occupies 940–1256; the sequence is HPLLGTLGAD…LIPFAAASEA (317 aa). His972 (proton acceptor; for dehydratase activity) is an active-site residue. Positions 1098 to 1256 are C-terminal hotdog fold; sequence MTEVDQNLFY…LIPFAAASEA (159 aa). The active-site Proton donor; for dehydratase activity is Asp1161. Positions 1299 to 1460 are methyltransferase (MT) domain; sequence LAHVVGQITH…LRAGFTGVET (162 aa). The ketoreductase (KR) domain stretch occupies residues 1989-2165; the sequence is TYILFGLAGA…ASVIDIGPIS (177 aa). The Carrier 1 domain maps to 2275–2357; the sequence is DVARVLRHAI…GLVDFAVDNL (83 aa). Ser2317 bears the O-(pantetheine 4'-phosphoryl)serine mark. Residues 2381 to 2404 show a composition bias toward low complexity; that stretch reads PKAKTDAPAAAPTPASATAPGSKS. The tract at residues 2381-2473 is disordered; sequence PKAKTDAPAA…SSQAASLESS (93 aa). Composition is skewed to polar residues over residues 2405 to 2418 and 2426 to 2437; these read DGNVSSIARSADQS and PQPTAILTNATA. Low complexity predominate over residues 2441–2456; the sequence is PVSPSLSVTGSTSSAA. Positions 2462–2473 are enriched in polar residues; it reads PTSSQAASLESS. A condensation (C) domain region spans residues 2489–2926; that stretch reads EKTLPMSYGQ…PQIFNSSKVQ (438 aa). The tract at residues 2950–3355 is adenylation (A) (KR) domain; sequence DIAAVQPTLT…GEFVLQARIK (406 aa). A disordered region spans residues 3483-3507; the sequence is PLTNKGGLKETPVARPTRYQNDPIP. One can recognise a Carrier 2 domain in the interval 3513–3592; sequence SSPFSSLDQV…QMASLLDGKD (80 aa). Residue Ser3552 is modified to O-(pantetheine 4'-phosphoryl)serine. The tract at residues 3633 to 3852 is reductase (R) domain; that stretch reads LTGATGFLGL…QFVPVEDVAN (220 aa).

It in the C-terminal section; belongs to the NRP synthetase family.

It participates in mycotoxin biosynthesis. Its function is as follows. Hybrid PKS-NRPS synthetase; part of the gene cluster that mediates the biosynthesis of UCS1025A, a member of the pyrrolizidinone family that acts as a strong telomerase inhibitor and displays potent antibacterial and antitumor properties. These compounds share a hemiaminal-containing pyrrolizidinone core fused with a gamma-lactone, giving a furopyrrolizidine that is connected to a decalin fragment. The polyketide synthase module (PKS) of the PKS-NRPS ucsA is responsible for the synthesis of the polyketide backbone via the condensation of an acetyl-CoA starter unit with 6 malonyl-CoA units. The downstream nonribosomal peptide synthetase (NRPS) module then amidates the carboxyl end of the polyketide with a 2S,3S-methylproline derived from L-isoleucine by the 2-oxoglutarate-dependent dioxygenase ucsF which converts L-isoleucine to (4S,5S)-4-methylpyrroline-5-carboxylate that is further converted to 2S,3S-methylproline by the pyrroline-5-carboxylate reductase ucsG. Reductive release of the completed aminoacyl polyketide from the assembly line can form the 3-pyrrolin-2-one structure via an intramolecular Knoevenagel reaction. Because ucsA lacks a designated enoylreductase (ER) domain, the required activity is provided the enoyl reductase ucsL. This keto acyclic precursor is the substrate of the Diels-Alderase ucsH, that catalyzes the Diels-Alder cycloaddition. Oxidation of the 3S-methyl group to a carboxylate by the cytochrome P450 monooxygenase ucsK allows an oxa-Michael cyclization that might involve the reductase/dehydrogenase ucsI and which furnishes the furopyrrolizidine. The oxidase ucsJ likely plays a critical role in stereoselective reduction of the C5-C6 double bond to afford the required R-configured carboxylate group. Further enolization and oxidation at C5 by an unidentified enzyme affords the last intermediate that can undergo oxa-Michael cyclization to yield UCS1025A. The chain is Hybrid PKS-NRPS synthetase ucsA from Acremonium sp.